Here is a 503-residue protein sequence, read N- to C-terminus: uncharacterized protein (503 aa).

Residues 26 to 46 (ILFLLLGLIILVNISINVATA) traverse the membrane as a helical segment. Disordered regions lie at residues 155 to 176 (RPLS…MSQM), 311 to 381 (YDAR…ESHE), 436 to 456 (QISD…NPGG), and 472 to 503 (VQEN…GKLN). Basic and acidic residues-rich tracts occupy residues 311–322 (YDARDQWRRGTE) and 334–346 (NPRE…DHNS). The span at 348–367 (AHRQNFSSHTHSQPNHSPPQ) shows a compositional bias: polar residues. A compositionally biased stretch (basic residues) spans 493–503 (SLHRSRTGKLN).

The protein resides in the membrane. This is an uncharacterized protein from Mus musculus (Mouse).